The sequence spans 395 residues: General transcription factor IIH subunit 2 (395 aa).

A VWFA domain is found at 60-236 (HLYVVVDGSR…HYKELLTHHV (177 aa)). Residue Tyr95 is modified to Phosphotyrosine. The C4-type zinc-finger motif lies at 291 to 308 (CPQCRAKYCELPVECKIC).

This sequence belongs to the GTF2H2 family. As to quaternary structure, component of the TFIID-containing RNA polymerase II pre-initiation complex that is composed of TBP and at least GTF2A1, GTF2A2, GTF2E1, GTF2E2, GTF2F1, GTF2H2, GTF2H3, GTF2H4, GTF2H5, GTF2B, TCEA1, ERCC2 and ERCC3. Component of the 7-subunit TFIIH core complex composed of XPB/ERCC3, XPD/ERCC2, GTF2H1, GTF2H2, GTF2H3, GTF2H4 and GTF2H5, which is active in NER. The core complex associates with the 3-subunit CDK-activating kinase (CAK) module composed of CCNH/cyclin H, CDK7 and MNAT1 to form the 10-subunit holoenzyme (holo-TFIIH) active in transcription. Interacts with XPB, XPD, GTF2H1 and GTF2H3.

It localises to the nucleus. Functionally, component of the general transcription and DNA repair factor IIH (TFIIH) core complex, which is involved in general and transcription-coupled nucleotide excision repair (NER) of damaged DNA and, when complexed to CAK, in RNA transcription by RNA polymerase II. In NER, TFIIH acts by opening DNA around the lesion to allow the excision of the damaged oligonucleotide and its replacement by a new DNA fragment. In transcription, TFIIH has an essential role in transcription initiation. When the pre-initiation complex (PIC) has been established, TFIIH is required for promoter opening and promoter escape. Phosphorylation of the C-terminal tail (CTD) of the largest subunit of RNA polymerase II by the kinase module CAK controls the initiation of transcription. The N-terminus of GTF2H2 interacts with and regulates XPD whereas an intact C-terminus is required for a successful escape of RNAP II form the promoter. The polypeptide is General transcription factor IIH subunit 2 (GTF2H2) (Bos taurus (Bovine)).